We begin with the raw amino-acid sequence, 264 residues long: 5'-nucleotidase SurE (264 aa).

A divalent metal cation-binding residues include Asp9, Asp10, Ser40, and Asn95.

It belongs to the SurE nucleotidase family. It depends on a divalent metal cation as a cofactor.

It is found in the cytoplasm. The catalysed reaction is a ribonucleoside 5'-phosphate + H2O = a ribonucleoside + phosphate. Nucleotidase that shows phosphatase activity on nucleoside 5'-monophosphates. The chain is 5'-nucleotidase SurE from Helicobacter hepaticus (strain ATCC 51449 / 3B1).